Here is a 133-residue protein sequence, read N- to C-terminus: Ribonuclease P protein component (133 aa).

The protein belongs to the RnpA family. In terms of assembly, consists of a catalytic RNA component (M1 or rnpB) and a protein subunit.

The enzyme catalyses Endonucleolytic cleavage of RNA, removing 5'-extranucleotides from tRNA precursor.. Functionally, RNaseP catalyzes the removal of the 5'-leader sequence from pre-tRNA to produce the mature 5'-terminus. It can also cleave other RNA substrates such as 4.5S RNA. The protein component plays an auxiliary but essential role in vivo by binding to the 5'-leader sequence and broadening the substrate specificity of the ribozyme. The protein is Ribonuclease P protein component of Synechococcus sp. (strain JA-2-3B'a(2-13)) (Cyanobacteria bacterium Yellowstone B-Prime).